The chain runs to 175 residues: Dof zinc finger protein DOF1.5 (175 aa).

Residues 29–57 are disordered; the sequence is EEQQQQQQPELQATTAVRSPSSDLTAEKR. The segment covering 37–52 has biased composition (polar residues); that stretch reads PELQATTAVRSPSSDL. Residues 62-116 form a Dof-type zinc finger; sequence IPCPRCKSMETKFCYFNNYNVNQPRHFCKGCQRYWTAGGALRNVPVGAGRRKSKP. C64, C67, C89, and C92 together coordinate Zn(2+). The short motif at 162 to 168 is the Nuclear localization signal element; sequence PVKRLRC.

It is found in the nucleus. Transcription factor that binds specifically to a 5'-AA[AG]G-3' consensus core sequence. Acts as a negative regulator in the phytochrome-mediated light responses. Controls phyB-mediated end-of-day response and the phyA-mediated anthocyanin accumulation. Not involved in direct flowering time regulation. This chain is Dof zinc finger protein DOF1.5 (DOF1.5), found in Arabidopsis thaliana (Mouse-ear cress).